Reading from the N-terminus, the 199-residue chain is Ribonuclease HII (199 aa).

An RNase H type-2 domain is found at 14–199 (GLLAGVDEAG…SFAPVAEVLR (186 aa)). A divalent metal cation contacts are provided by Asp-20, Glu-21, and Asp-112.

It belongs to the RNase HII family. Mn(2+) is required as a cofactor. Mg(2+) serves as cofactor.

The protein resides in the cytoplasm. It catalyses the reaction Endonucleolytic cleavage to 5'-phosphomonoester.. In terms of biological role, endonuclease that specifically degrades the RNA of RNA-DNA hybrids. The sequence is that of Ribonuclease HII from Polaromonas sp. (strain JS666 / ATCC BAA-500).